Consider the following 658-residue polypeptide: Trimethylamine N-oxide transport system permease protein TmoV (658 aa).

15 helical membrane passes run 20 to 40 (LGLA…AGLL), 103 to 123 (IGPI…YYLG), 127 to 147 (MALL…WDIA), 153 to 173 (VLVV…ISAW), 185 to 205 (VLAV…VIFF), 212 to 232 (GAVA…TLGL), 273 to 293 (VIML…PGLG), 300 to 320 (MGSF…LLAV), 349 to 369 (FLLM…VVPI), 420 to 440 (FMLS…ALLV), 447 to 467 (VLAA…RSVI), 469 to 489 (LYSV…IGVV), 517 to 537 (IPAI…ILIF), 585 to 605 (AVGF…AAFI), and 627 to 647 (FVLG…IMKW). Positions 147 to 326 (AMQTMSVLVV…LLAVTLDRMS (180 aa)) constitute an ABC transmembrane type-1 1 domain. The ABC transmembrane type-1 2 domain occupies 465–644 (SVITLYSVLA…LMALTFDMVI (180 aa)).

Belongs to the binding-protein-dependent transport system permease family. In terms of assembly, the complex is probably composed of two ATP-binding proteins (TmoW), two transmembrane proteins (TmoV) and a solute-binding protein (TmoX).

Its subcellular location is the cell inner membrane. Part of the ABC transporter complex TmoXWV involved in trimethylamine N-oxide (TMAO) import. Responsible for the translocation of the substrate across the membrane. Is specific for TMAO and essential for TMAO metabolism. This Ruegeria pomeroyi (strain ATCC 700808 / DSM 15171 / DSS-3) (Silicibacter pomeroyi) protein is Trimethylamine N-oxide transport system permease protein TmoV.